Reading from the N-terminus, the 282-residue chain is Homeobox protein CDX-4 (282 aa).

Disordered regions lie at residues methionine 13 to glycine 36 and methionine 98 to alanine 156. Residues serine 20–valine 29 show a composition bias toward low complexity. Polar residues-rich tracts occupy residues aspartate 110–glycine 124 and serine 133–serine 148. A DNA-binding region (homeobox) is located at residues lysine 171 to isoleucine 230.

Belongs to the Caudal homeobox family.

Its subcellular location is the nucleus. This is Homeobox protein CDX-4 (Cdx4) from Mus musculus (Mouse).